Here is a 501-residue protein sequence, read N- to C-terminus: ATP synthase subunit alpha (501 aa).

169 to 176 (GDRQTGKT) contacts ATP.

It belongs to the ATPase alpha/beta chains family. As to quaternary structure, F-type ATPases have 2 components, CF(1) - the catalytic core - and CF(0) - the membrane proton channel. CF(1) has five subunits: alpha(3), beta(3), gamma(1), delta(1), epsilon(1). CF(0) has three main subunits: a(1), b(2) and c(9-12). The alpha and beta chains form an alternating ring which encloses part of the gamma chain. CF(1) is attached to CF(0) by a central stalk formed by the gamma and epsilon chains, while a peripheral stalk is formed by the delta and b chains.

The protein resides in the cell membrane. The enzyme catalyses ATP + H2O + 4 H(+)(in) = ADP + phosphate + 5 H(+)(out). Its function is as follows. Produces ATP from ADP in the presence of a proton gradient across the membrane. The alpha chain is a regulatory subunit. In Streptococcus pyogenes serotype M2 (strain MGAS10270), this protein is ATP synthase subunit alpha.